The sequence spans 173 residues: Small ribosomal subunit protein uS5 (173 aa).

The 64-residue stretch at 17 to 80 folds into the S5 DRBM domain; that stretch reads LREKMIAVNR…EEARRNMVKV (64 aa).

Belongs to the universal ribosomal protein uS5 family. As to quaternary structure, part of the 30S ribosomal subunit. Contacts proteins S4 and S8.

With S4 and S12 plays an important role in translational accuracy. Its function is as follows. Located at the back of the 30S subunit body where it stabilizes the conformation of the head with respect to the body. The protein is Small ribosomal subunit protein uS5 of Acidovorax sp. (strain JS42).